Reading from the N-terminus, the 534-residue chain is Fimbrial subunit type 2 (534 aa).

A signal peptide spans 1–32 (MKYNTSTLGRRAAAAAGVLTLAVLGLAPMAQA). Disordered regions lie at residues 56-76 (GDGN…GKGA) and 329-376 (TYAE…DKDG). A compositionally biased stretch (pro residues) spans 334 to 347 (PPAPETPPANPDNP). The segment covering 361-376 (TIKKVDGNDRSGDKDG) has biased composition (basic and acidic residues). An LPXTG sorting signal motif is present at residues 492-496 (LPLTG). Position 495 is a pentaglycyl murein peptidoglycan amidated threonine (Thr-495). Residues 496 to 534 (GANGMLILTASGAALLMIAVGSVLVARYRERKRNRDLAA) constitute a propeptide, removed by sortase.

It is found in the secreted. Its subcellular location is the cell wall. It localises to the fimbrium. In terms of biological role, major fimbrial subunit of A.naeslundii. The sequence is that of Fimbrial subunit type 2 from Actinomyces naeslundii.